The sequence spans 200 residues: Pre-mRNA cleavage factor Im 25 kDa subunit 2 (200 aa).

In terms of domain architecture, Nudix hydrolase spans 45 to 172 (GMRTSVEGIL…KLLAVPLFEL (128 aa)). Positions 72 to 74 (TFC) are interaction with RNA. A Nudix box motif is present at residues 79-100 (GRLKPGENEADGLKRKLTSKLG).

Belongs to the Nudix hydrolase family. CPSF5 subfamily. As to quaternary structure, homodimer. Component of the cleavage factor Im (CFIm) complex. Forms a complex with cleavage and polyadenylation specificity factor (CPSF) subunits FIPS5, PAPS4 and CPSF30.

The protein resides in the nucleus. Component of the cleavage factor Im (CFIm) complex that plays a key role in pre-mRNA 3'-processing. Involved in association with CPSF6 or CPSF7 in pre-MRNA 3'-end poly(A) site cleavage and poly(A) addition. NUDT21/CPSF5 binds to cleavage and polyadenylation RNA substrates. The homodimer mediates simultaneous sequence-specific recognition of two 5'-UGUA-3' elements within the pre-mRNA. Binds to, but does not hydrolyze mono- and di-adenosine nucleotides. May have a role in mRNA export. This is Pre-mRNA cleavage factor Im 25 kDa subunit 2 from Arabidopsis thaliana (Mouse-ear cress).